The following is a 648-amino-acid chain: Cell surface glycoprotein MUC18 (648 aa).

The signal sequence occupies residues 1-23 (MGLPRLVCAFLFAACCCCRSATG). Ig-like V-type domains follow at residues 24-131 (VPGE…HYVQ) and 141-244 (PTIQ…KEVT). The Extracellular segment spans residues 24–560 (VPGEEKQPTP…EKKLPQQESK (537 aa)). Intrachain disulfides connect Cys50-Cys118, Cys163-Cys225, Cys274-Cys322, Cys367-Cys409, and Cys454-Cys501. N-linked (GlcNAc...) asparagine glycosylation is present at Asn58. Ig-like C2-type domains lie at 246–332 (PVLY…TTVM), 337–426 (PLEL…RRVS), and 432–512 (SPWM…SNTT). Residues 282 to 304 (PHFTINKKNPSTEEMEEESTDEN) form a disordered region. An N-linked (GlcNAc...) asparagine glycan is attached at Asn510. The segment covering 527-549 (DSSQTTGLSTPTVSPHSRANSTS) has biased composition (polar residues). The interval 527 to 554 (DSSQTTGLSTPTVSPHSRANSTSTEKKL) is disordered. The helical transmembrane segment at 561–581 (GVVIVAVIVCTLVLAVLGATL) threads the bilayer. Residues 582–648 (YYFYKKGKLP…QGEKYIDLRH (67 aa)) are Cytoplasmic-facing. A phosphoserine mark is found at Ser608 and Ser616. The disordered stretch occupies residues 626 to 648 (LQGSNGDKRAPGDQGEKYIDLRH). Residues 631–648 (GDKRAPGDQGEKYIDLRH) are compositionally biased toward basic and acidic residues.

As to expression, detected in lung, uterus and placenta (at protein level). Detected in heart, lung, kidney, adrenal gland, intestine, testis, skeletal muscle and aorta. Detected at low levels in adult brain, in particular in brain stem and spinal cord, but also in hippocampus, olfactory bulb and striatum (at protein level).

It is found in the cell membrane. The protein localises to the perikaryon. Plays a role in cell adhesion, and in cohesion of the endothelial monolayer at intercellular junctions in vascular tissue. Its expression may allow melanoma cells to interact with cellular elements of the vascular system, thereby enhancing hematogeneous tumor spread. Could be an adhesion molecule active in neural crest cells during embryonic development. Acts as a surface receptor that triggers tyrosine phosphorylation of FYN and PTK2/FAK1, and a transient increase in the intracellular calcium concentration. This chain is Cell surface glycoprotein MUC18 (Mcam), found in Rattus norvegicus (Rat).